The primary structure comprises 385 residues: S-adenosylmethionine synthase (385 aa).

H16 contacts ATP. Mg(2+) is bound at residue D18. A K(+)-binding site is contributed by E44. Residues E57 and Q100 each coordinate L-methionine. The interval Q100 to R110 is flexible loop. Residues D164–K166, K230–F231, D239, R245–K246, A262, and K266 contribute to the ATP site. Position 239 (D239) interacts with L-methionine. K270 is a binding site for L-methionine.

This sequence belongs to the AdoMet synthase family. As to quaternary structure, homotetramer; dimer of dimers. It depends on Mg(2+) as a cofactor. The cofactor is K(+).

The protein resides in the cytoplasm. The catalysed reaction is L-methionine + ATP + H2O = S-adenosyl-L-methionine + phosphate + diphosphate. The protein operates within amino-acid biosynthesis; S-adenosyl-L-methionine biosynthesis; S-adenosyl-L-methionine from L-methionine: step 1/1. Functionally, catalyzes the formation of S-adenosylmethionine (AdoMet) from methionine and ATP. The overall synthetic reaction is composed of two sequential steps, AdoMet formation and the subsequent tripolyphosphate hydrolysis which occurs prior to release of AdoMet from the enzyme. In Helicobacter pylori (strain P12), this protein is S-adenosylmethionine synthase.